The sequence spans 298 residues: Tyrosine recombinase XerC (298 aa).

One can recognise a Core-binding (CB) domain in the interval 1 to 85 (MQQQLDAYCA…AVRGLYHYLN (85 aa)). A Tyr recombinase domain is found at 106–285 (RLPKTLDTDR…DFQHLAAVYD (180 aa)). Active-site residues include arginine 146, lysine 170, histidine 237, arginine 240, and histidine 263. Tyrosine 272 functions as the O-(3'-phospho-DNA)-tyrosine intermediate in the catalytic mechanism.

It belongs to the 'phage' integrase family. XerC subfamily. Forms a cyclic heterotetrameric complex composed of two molecules of XerC and two molecules of XerD.

Its subcellular location is the cytoplasm. Site-specific tyrosine recombinase, which acts by catalyzing the cutting and rejoining of the recombining DNA molecules. The XerC-XerD complex is essential to convert dimers of the bacterial chromosome into monomers to permit their segregation at cell division. It also contributes to the segregational stability of plasmids. This is Tyrosine recombinase XerC from Pseudomonas fluorescens (strain ATCC BAA-477 / NRRL B-23932 / Pf-5).